The sequence spans 285 residues: tRNA U34 carboxymethyltransferase (285 aa).

Residues lysine 56, tryptophan 70, lysine 75, glycine 94, 143-144 (VE), tyrosine 163, and arginine 278 each bind carboxy-S-adenosyl-L-methionine.

The protein belongs to the class I-like SAM-binding methyltransferase superfamily. CmoB family. Homotetramer.

The catalysed reaction is carboxy-S-adenosyl-L-methionine + 5-hydroxyuridine(34) in tRNA = 5-carboxymethoxyuridine(34) in tRNA + S-adenosyl-L-homocysteine + H(+). In terms of biological role, catalyzes carboxymethyl transfer from carboxy-S-adenosyl-L-methionine (Cx-SAM) to 5-hydroxyuridine (ho5U) to form 5-carboxymethoxyuridine (cmo5U) at position 34 in tRNAs. This Campylobacter hominis (strain ATCC BAA-381 / DSM 21671 / CCUG 45161 / LMG 19568 / NCTC 13146 / CH001A) protein is tRNA U34 carboxymethyltransferase.